An 87-amino-acid chain; its full sequence is Cytochrome c6 (87 aa).

Heme c-binding residues include Cys14, Cys17, His18, and Met58.

The protein belongs to the cytochrome c family. PetJ subfamily. In terms of assembly, monomer. Binds 1 heme c group covalently per subunit.

The protein localises to the cellular thylakoid lumen. Functionally, functions as an electron carrier between membrane-bound cytochrome b6-f and photosystem I in oxygenic photosynthesis. This is Cytochrome c6 (petJ) from Parathermosynechococcus lividus (Thermostichus lividus).